We begin with the raw amino-acid sequence, 339 residues long: Serpentine receptor class alpha-21 (339 aa).

Transmembrane regions (helical) follow at residues 30–50 (FNFLFITTVILLSYCFTWLAI), 150–170 (FIAVSLLVLQLLLTLVSFYIA), 199–219 (VRTVVMVCCLVVTGFIYYLSV), 250–270 (ILIVLKLFCNMLSSIGINLLL), and 282–302 (VLVALFLPGVTYANLCLPLVI).

It belongs to the nematode receptor-like protein sra family.

Its subcellular location is the membrane. This Caenorhabditis elegans protein is Serpentine receptor class alpha-21 (sra-21).